The following is a 583-amino-acid chain: Membrane protein insertase YidC (583 aa).

The helical transmembrane segment at Ser-5 to Pro-25 threads the bilayer. Residues Lys-28–Glu-50 are disordered. Polar residues predominate over residues Lys-37 to Gln-46. The next 5 helical transmembrane spans lie at Pro-341–Tyr-361, Gly-362–Ala-382, Leu-427–Phe-447, Ile-477–Ile-497, and Leu-515–Leu-535.

The protein belongs to the OXA1/ALB3/YidC family. Type 1 subfamily. Interacts with the Sec translocase complex via SecD. Specifically interacts with transmembrane segments of nascent integral membrane proteins during membrane integration.

It localises to the cell inner membrane. In terms of biological role, required for the insertion and/or proper folding and/or complex formation of integral membrane proteins into the membrane. Involved in integration of membrane proteins that insert both dependently and independently of the Sec translocase complex, as well as at least some lipoproteins. Aids folding of multispanning membrane proteins. This chain is Membrane protein insertase YidC, found in Chlorobium limicola (strain DSM 245 / NBRC 103803 / 6330).